A 150-amino-acid chain; its full sequence is Glycine cleavage system H-like protein gcvH2 (150 aa).

In terms of domain architecture, Lipoyl-binding spans V44–K126.

It belongs to the GcvH family.

This Dictyostelium discoideum (Social amoeba) protein is Glycine cleavage system H-like protein gcvH2 (gcvH2).